Consider the following 172-residue polypeptide: Adenine phosphoribosyltransferase (172 aa).

It belongs to the purine/pyrimidine phosphoribosyltransferase family. Homodimer.

Its subcellular location is the cytoplasm. The catalysed reaction is AMP + diphosphate = 5-phospho-alpha-D-ribose 1-diphosphate + adenine. It functions in the pathway purine metabolism; AMP biosynthesis via salvage pathway; AMP from adenine: step 1/1. Its function is as follows. Catalyzes a salvage reaction resulting in the formation of AMP, that is energically less costly than de novo synthesis. The chain is Adenine phosphoribosyltransferase from Prochlorococcus marinus (strain NATL2A).